Here is a 61-residue protein sequence, read N- to C-terminus: Temporin-SN2 (61 aa).

An N-terminal signal peptide occupies residues 1 to 22; it reads MFTLKKTLLLLFFLGTINLSLC. Residues 23 to 44 constitute a propeptide, removed in mature form; sequence EEERNAEEERRDGDDEMDVEVK. K61 is subject to Lysine amide.

It belongs to the frog skin active peptide (FSAP) family. Temporin subfamily. In terms of tissue distribution, expressed by the skin glands.

The protein localises to the secreted. Antimicrobial peptide. Active against some Gram-positive and Gram-negative bacterial strains. Active against fungus C.glabrata 090902 but not against C.albicans ATCC 12231. Shows very weak hemolytic activity against human erythrocytes. The sequence is that of Temporin-SN2 from Sylvirana spinulosa (Fine-spined frog).